A 429-amino-acid chain; its full sequence is Glucose-1-phosphate adenylyltransferase (429 aa).

Residues G162, 177–178, and S209 contribute to the alpha-D-glucose 1-phosphate site; that span reads EK.

Belongs to the bacterial/plant glucose-1-phosphate adenylyltransferase family. In terms of assembly, homotetramer.

The catalysed reaction is alpha-D-glucose 1-phosphate + ATP + H(+) = ADP-alpha-D-glucose + diphosphate. The protein operates within glycan biosynthesis; glycogen biosynthesis. Involved in the biosynthesis of ADP-glucose, a building block required for the elongation reactions to produce glycogen. Catalyzes the reaction between ATP and alpha-D-glucose 1-phosphate (G1P) to produce pyrophosphate and ADP-Glc. In Gloeothece citriformis (strain PCC 7424) (Cyanothece sp. (strain PCC 7424)), this protein is Glucose-1-phosphate adenylyltransferase.